Consider the following 477-residue polypeptide: Methylenetetrahydrofolate--tRNA-(uracil-5-)-methyltransferase TrmFO (477 aa).

15–20 (GAGLAG) provides a ligand contact to FAD.

The protein belongs to the MnmG family. TrmFO subfamily. FAD serves as cofactor.

The protein resides in the cytoplasm. The enzyme catalyses uridine(54) in tRNA + (6R)-5,10-methylene-5,6,7,8-tetrahydrofolate + NADH + H(+) = 5-methyluridine(54) in tRNA + (6S)-5,6,7,8-tetrahydrofolate + NAD(+). The catalysed reaction is uridine(54) in tRNA + (6R)-5,10-methylene-5,6,7,8-tetrahydrofolate + NADPH + H(+) = 5-methyluridine(54) in tRNA + (6S)-5,6,7,8-tetrahydrofolate + NADP(+). Functionally, catalyzes the folate-dependent formation of 5-methyl-uridine at position 54 (M-5-U54) in all tRNAs. This chain is Methylenetetrahydrofolate--tRNA-(uracil-5-)-methyltransferase TrmFO, found in Nitrobacter hamburgensis (strain DSM 10229 / NCIMB 13809 / X14).